Here is a 140-residue protein sequence, read N- to C-terminus: Profilin-1 (140 aa).

The residue at position 2 (A2) is an N-acetylalanine. A Phosphoserine modification is found at S28. A Glycyl lysine isopeptide (Lys-Gly) (interchain with G-Cter in SUMO2); alternate cross-link involves residue K54. K54 is covalently cross-linked (Glycyl lysine isopeptide (Lys-Gly) (interchain with G-Cter in ubiquitin); alternate). Phosphoserine is present on residues S57 and S85. K105 and K108 each carry N6-acetyllysine. Y129 bears the Phosphotyrosine mark. Residue S138 is modified to Phosphoserine; by ROCK1.

Belongs to the profilin family. As to quaternary structure, found in a complex with XPO6, Ran, ACTB and PFN1. Interacts with ACTB. Interacts with VASP. Interacts with HTT. Interacts with SH3BGRL. Occurs in many kinds of cells as a complex with monomeric actin in a 1:1 ratio. Interacts with ACTMAP. In terms of processing, phosphorylation at Ser-138 reduces its affinity for G-actin and blocks its interaction with HTT, reducing its ability to inhibit androgen receptor (AR) and HTT aggregation. Expressed in epididymis (at protein level).

The protein resides in the cytoplasm. It is found in the cytoskeleton. Its function is as follows. Binds to actin and affects the structure of the cytoskeleton. At high concentrations, profilin prevents the polymerization of actin, whereas it enhances it at low concentrations. By binding to PIP2, it inhibits the formation of IP3 and DG. Inhibits androgen receptor (AR) and HTT aggregation and binding of G-actin is essential for its inhibition of AR. This is Profilin-1 (PFN1) from Homo sapiens (Human).